The primary structure comprises 210 residues: Uracil phosphoribosyltransferase (210 aa).

5-phospho-alpha-D-ribose 1-diphosphate is bound by residues R78, R103, and 130–138; that span reads DPMLATGGS. Uracil-binding positions include I193 and 198-200; that span reads GDA. D199 is a 5-phospho-alpha-D-ribose 1-diphosphate binding site.

It belongs to the UPRTase family. The cofactor is Mg(2+).

It catalyses the reaction UMP + diphosphate = 5-phospho-alpha-D-ribose 1-diphosphate + uracil. It participates in pyrimidine metabolism; UMP biosynthesis via salvage pathway; UMP from uracil: step 1/1. Its activity is regulated as follows. Allosterically activated by GTP. Catalyzes the conversion of uracil and 5-phospho-alpha-D-ribose 1-diphosphate (PRPP) to UMP and diphosphate. In Laribacter hongkongensis (strain HLHK9), this protein is Uracil phosphoribosyltransferase.